The following is a 316-amino-acid chain: GPI-specific phospholipase A2-like PGAP3 (316 aa).

The signal sequence occupies residues 1–19 (MFLAAAAFLLSAPASASQG). Over 20-97 (DKEPVYRDCV…GKWPFARFLC (78 aa)) the chain is Lumenal. The N-linked (GlcNAc...) asparagine glycan is linked to asparagine 36. Residues 98–118 (FEEPASALASLLNGLACLLML) form a helical membrane-spanning segment. Residues 119–131 (LRYRSAVPCQSPM) are Cytoplasmic-facing. Residues 132-152 (YHTITAFSLVSLNAWFWSTVF) traverse the membrane as a helical segment. At 153–165 (HTRDTYLTEKMDY) the chain is on the lumenal side. The chain crosses the membrane as a helical span at residues 166–186 (FCASAVILYSIYLCCVRTLGL). Over 187–194 (RRPAISSM) the chain is Cytoplasmic. Residues 195-215 (VGVLLILAFTSHVSYLTFVSF) traverse the membrane as a helical segment. At 216–220 (DYGYN) the chain is on the lumenal side. The helical transmembrane segment at 221-241 (MAANASIGIINLLWWLCWCWL) threads the bilayer. Residues 242-254 (NRRILPYWWRCGM) lie on the Cytoplasmic side of the membrane. The helical transmembrane segment at 255-275 (VVLLLHGLALLELLDFPPLFW) threads the bilayer. Residues 276–278 (VLD) lie on the Lumenal side of the membrane. A helical transmembrane segment spans residues 279-299 (AHAVWHLSTVPVHFLFYSFLI). The Cytoplasmic segment spans residues 300–316 (DDSLHLLNTEKPGVKLD).

Belongs to the PGAP3 family.

The protein resides in the golgi apparatus membrane. In terms of biological role, involved in the fatty acid remodeling steps of GPI-anchor maturation where the unsaturated acyl chain at sn-2 of inositol phosphate is replaced by a saturated stearoyl chain. May catalyze the first step of the fatty acid remodeling, by removing the unsaturated acyl chain at sn-2 of inositol phosphate, generating a lyso-GPI intermediate. The fatty acid remodeling steps is critical for the integration of GPI-APs into lipid rafts. This Danio rerio (Zebrafish) protein is GPI-specific phospholipase A2-like PGAP3.